The following is a 378-amino-acid chain: Deoxyhypusine synthase (378 aa).

NAD(+) is bound by residues 107 to 111 (SNLIS), 133 to 135 (SAG), E139, and D253. Residue 138–139 (EE) coordinates spermidine. D258 is a binding site for spermidine. G300 serves as a coordination point for NAD(+). Residue H305 participates in spermidine binding. 325–326 (TG) contributes to the NAD(+) binding site. Residues 331–333 (GSD) and 340–346 (EAISWGK) each bind spermidine. K346 (nucleophile) is an active-site residue. 359 to 360 (DA) is a binding site for NAD(+).

This sequence belongs to the deoxyhypusine synthase family. It depends on NAD(+) as a cofactor.

The enzyme catalyses [eIF5A protein]-L-lysine + spermidine = [eIF5A protein]-deoxyhypusine + propane-1,3-diamine. The protein operates within protein modification; eIF5A hypusination. In terms of biological role, catalyzes the NAD-dependent oxidative cleavage of spermidine and the subsequent transfer of the butylamine moiety of spermidine to the epsilon-amino group of a specific lysine residue of the eIF-5A precursor protein to form the intermediate deoxyhypusine residue. This chain is Deoxyhypusine synthase (DYS1), found in Debaryomyces hansenii (strain ATCC 36239 / CBS 767 / BCRC 21394 / JCM 1990 / NBRC 0083 / IGC 2968) (Yeast).